The primary structure comprises 497 residues: Probable malate:quinone oxidoreductase (497 aa).

It belongs to the MQO family. FAD is required as a cofactor.

The enzyme catalyses (S)-malate + a quinone = a quinol + oxaloacetate. The protein operates within carbohydrate metabolism; tricarboxylic acid cycle; oxaloacetate from (S)-malate (quinone route): step 1/1. This chain is Probable malate:quinone oxidoreductase, found in Wolinella succinogenes (strain ATCC 29543 / DSM 1740 / CCUG 13145 / JCM 31913 / LMG 7466 / NCTC 11488 / FDC 602W) (Vibrio succinogenes).